The sequence spans 262 residues: Hydroxyethylthiazole kinase (262 aa).

Met-39 provides a ligand contact to substrate. ATP is bound by residues Lys-115 and Thr-160. Gly-187 is a binding site for substrate.

The protein belongs to the Thz kinase family. The cofactor is Mg(2+).

It carries out the reaction 5-(2-hydroxyethyl)-4-methylthiazole + ATP = 4-methyl-5-(2-phosphooxyethyl)-thiazole + ADP + H(+). It participates in cofactor biosynthesis; thiamine diphosphate biosynthesis; 4-methyl-5-(2-phosphoethyl)-thiazole from 5-(2-hydroxyethyl)-4-methylthiazole: step 1/1. Its function is as follows. Catalyzes the phosphorylation of the hydroxyl group of 4-methyl-5-beta-hydroxyethylthiazole (THZ). This is Hydroxyethylthiazole kinase from Staphylococcus epidermidis (strain ATCC 35984 / DSM 28319 / BCRC 17069 / CCUG 31568 / BM 3577 / RP62A).